The following is a 308-amino-acid chain: Elongation factor Ts (308 aa).

Residues 80 to 83 (TDFV) form an involved in Mg(2+) ion dislocation from EF-Tu region.

Belongs to the EF-Ts family.

It is found in the cytoplasm. Its function is as follows. Associates with the EF-Tu.GDP complex and induces the exchange of GDP to GTP. It remains bound to the aminoacyl-tRNA.EF-Tu.GTP complex up to the GTP hydrolysis stage on the ribosome. In Rhodopseudomonas palustris (strain BisB5), this protein is Elongation factor Ts.